A 257-amino-acid chain; its full sequence is Imidazole glycerol phosphate synthase subunit HisF (257 aa).

Catalysis depends on residues aspartate 12 and aspartate 131.

Belongs to the HisA/HisF family. In terms of assembly, heterodimer of HisH and HisF.

It localises to the cytoplasm. It carries out the reaction 5-[(5-phospho-1-deoxy-D-ribulos-1-ylimino)methylamino]-1-(5-phospho-beta-D-ribosyl)imidazole-4-carboxamide + L-glutamine = D-erythro-1-(imidazol-4-yl)glycerol 3-phosphate + 5-amino-1-(5-phospho-beta-D-ribosyl)imidazole-4-carboxamide + L-glutamate + H(+). It participates in amino-acid biosynthesis; L-histidine biosynthesis; L-histidine from 5-phospho-alpha-D-ribose 1-diphosphate: step 5/9. In terms of biological role, IGPS catalyzes the conversion of PRFAR and glutamine to IGP, AICAR and glutamate. The HisF subunit catalyzes the cyclization activity that produces IGP and AICAR from PRFAR using the ammonia provided by the HisH subunit. This Burkholderia lata (strain ATCC 17760 / DSM 23089 / LMG 22485 / NCIMB 9086 / R18194 / 383) protein is Imidazole glycerol phosphate synthase subunit HisF.